The following is a 757-amino-acid chain: Exo-alpha-(1-&gt;6)-L-arabinopyranosidase (757 aa).

Residue Asp-232 is part of the active site.

Belongs to the glycosyl hydrolase 3 family. In terms of assembly, homotetramer.

Its activity is regulated as follows. Completely inhibited by Cu(2+) and activated by Co(2+). Functionally, catalyzes the hydrolysis of a non-reducing terminal alpha-L-arabinopyranosidic linkage in ginsenoside Rb2 (alpha-L-arabinopyranosyl-(1-&gt;6)-alpha-D-glucopyranosyl) to release alpha-D-glucopyranosyl (Rd). It is not able to hydrolyze alpha-L-arabinofuranosyl-(1-&gt;6)-alpha-D-glucopyranosyl (Rc). In Bifidobacterium longum, this protein is Exo-alpha-(1-&gt;6)-L-arabinopyranosidase (apy).